The chain runs to 263 residues: Hydroxyethylthiazole kinase (263 aa).

Substrate is bound at residue M39. ATP is bound by residues K115 and T160. G187 is a substrate binding site.

Belongs to the Thz kinase family. Mg(2+) is required as a cofactor.

The catalysed reaction is 5-(2-hydroxyethyl)-4-methylthiazole + ATP = 4-methyl-5-(2-phosphooxyethyl)-thiazole + ADP + H(+). Its pathway is cofactor biosynthesis; thiamine diphosphate biosynthesis; 4-methyl-5-(2-phosphoethyl)-thiazole from 5-(2-hydroxyethyl)-4-methylthiazole: step 1/1. Its function is as follows. Catalyzes the phosphorylation of the hydroxyl group of 4-methyl-5-beta-hydroxyethylthiazole (THZ). The chain is Hydroxyethylthiazole kinase from Staphylococcus aureus (strain JH9).